Consider the following 550-residue polypeptide: CTP synthase (550 aa).

The amidoligase domain stretch occupies residues 1–277 (MNGSADAGPR…GRAVERALGL (277 aa)). Position 23 (Ser23) interacts with CTP. Ser23 provides a ligand contact to UTP. 24–29 (SLGKGI) is an ATP binding site. Tyr64 provides a ligand contact to L-glutamine. Residue Asp81 participates in ATP binding. Mg(2+) contacts are provided by Asp81 and Glu151. CTP contacts are provided by residues 158–160 (DIE), 198–203 (KTKPTQ), and Lys234. Residues 198–203 (KTKPTQ) and Lys234 each bind UTP. Val252 is a binding site for ATP. The Glutamine amidotransferase type-1 domain maps to 302–549 (KIAIAGKYVK…VEAALAYQER (248 aa)). Gly364 lines the L-glutamine pocket. The Nucleophile; for glutamine hydrolysis role is filled by Cys391. L-glutamine-binding positions include 392-395 (LGLQ), Glu415, and Arg472. Residues His522 and Glu524 contribute to the active site.

The protein belongs to the CTP synthase family. Homotetramer in the presence of UTP and ATP. Is in a protein concentration-dependent equilibrium between monomer, dimer, and tetramer in the absence of UTP and ATP.

It catalyses the reaction UTP + L-glutamine + ATP + H2O = CTP + L-glutamate + ADP + phosphate + 2 H(+). The catalysed reaction is L-glutamine + H2O = L-glutamate + NH4(+). It carries out the reaction UTP + NH4(+) + ATP = CTP + ADP + phosphate + 2 H(+). It participates in pyrimidine metabolism; CTP biosynthesis via de novo pathway; CTP from UDP: step 2/2. Its activity is regulated as follows. Allosterically activated by GTP, when glutamine is the substrate. GTP has no effect on the reaction when ammonia is the substrate. The allosteric effector GTP functions by stabilizing the protein conformation that binds the tetrahedral intermediate(s) formed during glutamine hydrolysis. Inhibited by the product CTP, via allosteric rather than competitive inhibition. Its function is as follows. Catalyzes the ATP-dependent amination of UTP to CTP with either L-glutamine or ammonia as the source of nitrogen. Regulates intracellular CTP levels through interactions with the four ribonucleotide triphosphates. In Thermus thermophilus (strain ATCC 27634 / DSM 579 / HB8), this protein is CTP synthase.